Consider the following 187-residue polypeptide: uncharacterized protein (187 aa).

The region spanning 6-66 (TDLAEQIFSA…QFAHRVFSMF (61 aa)) is the HTH tetR-type domain. The segment at residues 29–48 (SMLKLAKEANVAAGTIYLYF) is a DNA-binding region (H-T-H motif).

This is an uncharacterized protein from Haemophilus influenzae (strain ATCC 51907 / DSM 11121 / KW20 / Rd).